The sequence spans 656 residues: tRNA 5-methylaminomethyl-2-thiouridine biosynthesis bifunctional protein MnmC (656 aa).

Residues 1 to 236 are tRNA (mnm(5)s(2)U34)-methyltransferase; sequence MTDPLIPAVL…KRAMLVGRFA (236 aa). The interval 260–656 is FAD-dependent cmnm(5)s(2)U34 oxidoreductase; sequence IGTGLAGCAV…LRALRQGTVS (397 aa).

The protein in the N-terminal section; belongs to the methyltransferase superfamily. tRNA (mnm(5)s(2)U34)-methyltransferase family. It in the C-terminal section; belongs to the DAO family. Requires FAD as cofactor.

It localises to the cytoplasm. The enzyme catalyses 5-aminomethyl-2-thiouridine(34) in tRNA + S-adenosyl-L-methionine = 5-methylaminomethyl-2-thiouridine(34) in tRNA + S-adenosyl-L-homocysteine + H(+). Catalyzes the last two steps in the biosynthesis of 5-methylaminomethyl-2-thiouridine (mnm(5)s(2)U) at the wobble position (U34) in tRNA. Catalyzes the FAD-dependent demodification of cmnm(5)s(2)U34 to nm(5)s(2)U34, followed by the transfer of a methyl group from S-adenosyl-L-methionine to nm(5)s(2)U34, to form mnm(5)s(2)U34. This is tRNA 5-methylaminomethyl-2-thiouridine biosynthesis bifunctional protein MnmC from Paraburkholderia xenovorans (strain LB400).